We begin with the raw amino-acid sequence, 441 residues long: Proline--tRNA ligase (441 aa).

It belongs to the class-II aminoacyl-tRNA synthetase family. ProS type 2 subfamily. In terms of assembly, homodimer.

The protein resides in the cytoplasm. It catalyses the reaction tRNA(Pro) + L-proline + ATP = L-prolyl-tRNA(Pro) + AMP + diphosphate. Its function is as follows. Catalyzes the attachment of proline to tRNA(Pro) in a two-step reaction: proline is first activated by ATP to form Pro-AMP and then transferred to the acceptor end of tRNA(Pro). The sequence is that of Proline--tRNA ligase from Methylorubrum extorquens (strain PA1) (Methylobacterium extorquens).